The chain runs to 324 residues: Chlorophyllase-1 (324 aa).

The short motif at 136–140 (GHSRG) is the GXSXG element. The active-site Nucleophile is the Ser138. Active-site charge relay system residues include Asp168 and His243.

Belongs to the AB hydrolase superfamily. Lipase family. In terms of tissue distribution, expressed in seedlings, leaves, flowers and siliques, but not in roots.

The protein localises to the cytoplasm. It is found in the cytosol. It carries out the reaction a chlorophyll + H2O = a chlorophyllide + phytol + H(+). The catalysed reaction is chlorophyll a + H2O = phytol + chlorophyllide a + H(+). It functions in the pathway porphyrin-containing compound metabolism; chlorophyll degradation. Its function is as follows. Catalyzes the hydrolysis of ester bond in chlorophyll to yield chlorophyllide and phytol. Shows a preferential activity toward chlorophyll a. Does not seem to be required for chlorophyll degradation during senescence. May modulate the balance between different plant defense pathways. This chain is Chlorophyllase-1, found in Arabidopsis thaliana (Mouse-ear cress).